The sequence spans 161 residues: Phosphopantetheine adenylyltransferase (161 aa).

Residue serine 8 participates in substrate binding. Residues 8 to 9 and histidine 16 contribute to the ATP site; that span reads SF. Lysine 40, threonine 72, and arginine 86 together coordinate substrate. ATP-binding positions include 87–89, glutamate 97, and 122–128; these read GLR and HSFLSSS.

It belongs to the bacterial CoaD family. As to quaternary structure, homohexamer. The cofactor is Mg(2+).

The protein localises to the cytoplasm. The catalysed reaction is (R)-4'-phosphopantetheine + ATP + H(+) = 3'-dephospho-CoA + diphosphate. The protein operates within cofactor biosynthesis; coenzyme A biosynthesis; CoA from (R)-pantothenate: step 4/5. In terms of biological role, reversibly transfers an adenylyl group from ATP to 4'-phosphopantetheine, yielding dephospho-CoA (dPCoA) and pyrophosphate. This is Phosphopantetheine adenylyltransferase from Prochlorococcus marinus (strain SARG / CCMP1375 / SS120).